A 68-amino-acid polypeptide reads, in one-letter code: UPF0253 protein VF_0662 (68 aa).

The protein belongs to the UPF0253 family.

This Aliivibrio fischeri (strain ATCC 700601 / ES114) (Vibrio fischeri) protein is UPF0253 protein VF_0662.